A 220-amino-acid chain; its full sequence is Tumor protein D54 (220 aa).

Methionine 1 is subject to N-acetylmethionine. A compositionally biased stretch (polar residues) spans 1–14 (MDSASQDINLNSPN). The disordered stretch occupies residues 1-26 (MDSASQDINLNSPNKGVLSDFMTDVP). Phosphoserine is present on residues serine 3, serine 12, and serine 19. Positions 40 to 82 (GLTEVEEEELRAELAKVEEEIVTLRQVLAAKERHCGELKRRLG) form a coiled coil. A phosphoserine mark is found at serine 96, serine 149, serine 168, and serine 175. Residue threonine 177 is modified to Phosphothreonine. Position 180 is a phosphoserine (serine 180). Threonine 187 is subject to Phosphothreonine. Residues 189-220 (KSKVVGGRENGSDTLPSSPGSGDQTLPDHAPF) form a disordered region. A compositionally biased stretch (polar residues) spans 200–212 (SDTLPSSPGSGDQ). Serine 206 and serine 209 each carry phosphoserine.

Belongs to the TPD52 family. Forms a homodimer or heterodimer with other members of the family. Interacts with MAL2.

The polypeptide is Tumor protein D54 (Tpd52l2) (Rattus norvegicus (Rat)).